An 81-amino-acid chain; its full sequence is MSEEQPTFEENLATLETIVAQLEQGDIPLEQALTQFQKGVALSKELQTTLQDAEKTLTTMMNDSDQEVAFETPQGGTGDAD.

The tract at residues 61–81 (MNDSDQEVAFETPQGGTGDAD) is disordered.

The protein belongs to the XseB family. As to quaternary structure, heterooligomer composed of large and small subunits.

It localises to the cytoplasm. It catalyses the reaction Exonucleolytic cleavage in either 5'- to 3'- or 3'- to 5'-direction to yield nucleoside 5'-phosphates.. Functionally, bidirectionally degrades single-stranded DNA into large acid-insoluble oligonucleotides, which are then degraded further into small acid-soluble oligonucleotides. The chain is Exodeoxyribonuclease 7 small subunit from Levilactobacillus brevis (strain ATCC 367 / BCRC 12310 / CIP 105137 / JCM 1170 / LMG 11437 / NCIMB 947 / NCTC 947) (Lactobacillus brevis).